Reading from the N-terminus, the 425-residue chain is Interferon regulatory factor 8 (425 aa).

The segment at residues 7–114 is a DNA-binding region (IRF tryptophan pentad repeat); that stretch reads GRRLRQWLIE…EPYKVYRIVP (108 aa).

The protein belongs to the IRF family.

The protein localises to the nucleus. It is found in the cytoplasm. Functionally, plays a role as a transcriptional activator or repressor. Specifically binds to the upstream regulatory region of type I IFN and IFN-inducible MHC class I genes (the interferon consensus sequence (ICS)). Plays a regulatory role in cells of the immune system. In Gallus gallus (Chicken), this protein is Interferon regulatory factor 8 (IRF8).